The following is a 132-amino-acid chain: uncharacterized protein (132 aa).

Its function is as follows. The presence of the two linear plasmids, termed pGKL1 and pGKL2, in strains of Kluyveromyces lactis confers the killer phenotype to the host cell, by promoting the secretion of a toxin able to inhibit the growth of sensitive strains. This is an uncharacterized protein from Kluyveromyces lactis (strain ATCC 8585 / CBS 2359 / DSM 70799 / NBRC 1267 / NRRL Y-1140 / WM37) (Yeast).